A 191-amino-acid chain; its full sequence is uncharacterized protein (191 aa).

2 disordered regions span residues 1–42 (MSEE…DADA) and 145–191 (QNQE…IDLD). Composition is skewed to basic and acidic residues over residues 11–26 (PRPD…RATG) and 147–178 (QERR…RDEG).

As to quaternary structure, it may form a heterotetramer of two glucokinase subunits (glk) with two ORF2 proteins.

Functionally, may be involved in glucose transport or metabolism. This is an uncharacterized protein from Streptomyces coelicolor (strain ATCC BAA-471 / A3(2) / M145).